We begin with the raw amino-acid sequence, 221 residues long: uncharacterized protein (221 aa).

Positions 1-22 are disordered; sequence MGLDNFTAPSTGTTPAGSPFLR. Residues 7 to 16 are compositionally biased toward polar residues; the sequence is TAPSTGTTPA.

This sequence belongs to the IIV-6 259R family.

This is an uncharacterized protein from Invertebrate iridescent virus 3 (IIV-3).